The chain runs to 243 residues: Segregation and condensation protein A (243 aa).

The protein belongs to the ScpA family. In terms of assembly, component of a cohesin-like complex composed of ScpA, ScpB and the Smc homodimer, in which ScpA and ScpB bind to the head domain of Smc. The presence of the three proteins is required for the association of the complex with DNA.

It is found in the cytoplasm. Its function is as follows. Participates in chromosomal partition during cell division. May act via the formation of a condensin-like complex containing Smc and ScpB that pull DNA away from mid-cell into both cell halves. The polypeptide is Segregation and condensation protein A (Halothermothrix orenii (strain H 168 / OCM 544 / DSM 9562)).